The chain runs to 393 residues: Fructose-bisphosphate aldolase 4, cytosolic (393 aa).

R73 is a substrate binding site. Position 207 is an S-glutathionyl cysteine; transient; alternate (C207). C207 bears the S-nitrosocysteine; transient; alternate mark. Residue E217 is the Proton acceptor of the active site. The active-site Schiff-base intermediate with dihydroxyacetone-P is K259. Residues 301–303 (SGG) and R333 contribute to the substrate site.

It belongs to the class I fructose-bisphosphate aldolase family. Homotetramer. Post-translationally, S-glutathionylated at Cys-207. S-nitrosylated at Cys-207. As to expression, highly expressed in flowers.

The protein localises to the cytoplasm. Its subcellular location is the cytosol. It carries out the reaction beta-D-fructose 1,6-bisphosphate = D-glyceraldehyde 3-phosphate + dihydroxyacetone phosphate. The protein operates within carbohydrate degradation; glycolysis; D-glyceraldehyde 3-phosphate and glycerone phosphate from D-glucose: step 4/4. Functionally, fructose-bisphosphate aldolase that plays a key role in glycolysis and gluconeogenesis. The protein is Fructose-bisphosphate aldolase 4, cytosolic of Arabidopsis thaliana (Mouse-ear cress).